Consider the following 313-residue polypeptide: Secreted mono- and diacylglycerol lipase MDL5 (313 aa).

The signal sequence occupies residues Met1 to Ser20. Residues Cys66 and Cys306 are joined by a disulfide bond. N-linked (GlcNAc...) asparagine glycans are attached at residues Asn72 and Asn111. Ser180 serves as the catalytic Nucleophile. Asp238 is an active-site residue. A glycan (N-linked (GlcNAc...) asparagine) is linked at Asn263. His290 is an active-site residue.

The protein belongs to the AB hydrolase superfamily. Lipase family. Class 3 subfamily.

The protein localises to the secreted. Its subcellular location is the cell wall. The catalysed reaction is a monoacylglycerol + H2O = glycerol + a fatty acid + H(+). It carries out the reaction a diacylglycerol + H2O = a monoacylglycerol + a fatty acid + H(+). Its function is as follows. Secreted lipase involved in Dandruff and seborrheic dermatitis (D/SD) probably via lipase-mediated breakdown of sebaceous lipids and release of irritating free fatty acids. Shows activity against monoglyceride and diglyceride substrates, but not triglyceride substrates and does not exhibit regio-selective production of diacylglycerols. Cleaves oleic acid from 1,2 isomers of diolein on both the 1 and the 2 position of the glycerol backbone, resulting mainly in free fatty acids but no monoolein is detected. Shows activity on monoolein and liberates mostly free fatty acids, but can also perform the reverse reaction and produce diolein. This is Secreted mono- and diacylglycerol lipase MDL5 from Malassezia globosa (strain ATCC MYA-4612 / CBS 7966) (Dandruff-associated fungus).